The sequence spans 122 residues: uncharacterized protein (122 aa).

This is an uncharacterized protein from Arabidopsis thaliana (Mouse-ear cress).